We begin with the raw amino-acid sequence, 443 residues long: Flavastacin (443 aa).

A signal peptide spans 1–15; the sequence is MTRKLLILSGCLILA. The propeptide at 16-91 is activation peptide; it reads LNSCKSDMET…ANPDISTVER (76 aa). The region spanning 92-289 is the Peptidase M12A domain; it reads STIVSSFIKT…AGINHLYGPV (198 aa). Position 189 (H189) interacts with Zn(2+). E190 is an active-site residue. Positions 193 and 199 each coordinate Zn(2+). Residues 297 to 440 enclose the Ricin B-type lectin domain; it reads GTYTLTTSLA…PYTKQRFTLT (144 aa). O-linked (Man...) serine glycosylation is present at S355.

Zn(2+) is required as a cofactor. Post-translationally, O-linked glycan consists of the Man, GlcNAc, GlcU, Glc, GlcU, Rha, Man heptasaccharide.

It catalyses the reaction Hydrolyzes polypeptides on the amino-side of Asp in -Xaa-|-Asp-. Acts very slowly on -Xaa-|-Glu.. Zinc metallendopeptidase that cleaves preferentially on N-terminal side of aspartate-containing substrates. This chain is Flavastacin, found in Elizabethkingia meningoseptica (Chryseobacterium meningosepticum).